Reading from the N-terminus, the 555-residue chain is Dihydroxy-acid dehydratase (555 aa).

A Mg(2+)-binding site is contributed by D78. C119 contributes to the [2Fe-2S] cluster binding site. Positions 120 and 121 each coordinate Mg(2+). K121 carries the N6-carboxylysine modification. C195 contacts [2Fe-2S] cluster. Position 444 (E444) interacts with Mg(2+). Residue S470 is the Proton acceptor of the active site.

Belongs to the IlvD/Edd family. As to quaternary structure, homodimer. It depends on [2Fe-2S] cluster as a cofactor. Mg(2+) serves as cofactor.

The catalysed reaction is (2R)-2,3-dihydroxy-3-methylbutanoate = 3-methyl-2-oxobutanoate + H2O. It carries out the reaction (2R,3R)-2,3-dihydroxy-3-methylpentanoate = (S)-3-methyl-2-oxopentanoate + H2O. The protein operates within amino-acid biosynthesis; L-isoleucine biosynthesis; L-isoleucine from 2-oxobutanoate: step 3/4. It functions in the pathway amino-acid biosynthesis; L-valine biosynthesis; L-valine from pyruvate: step 3/4. Its function is as follows. Functions in the biosynthesis of branched-chain amino acids. Catalyzes the dehydration of (2R,3R)-2,3-dihydroxy-3-methylpentanoate (2,3-dihydroxy-3-methylvalerate) into 2-oxo-3-methylpentanoate (2-oxo-3-methylvalerate) and of (2R)-2,3-dihydroxy-3-methylbutanoate (2,3-dihydroxyisovalerate) into 2-oxo-3-methylbutanoate (2-oxoisovalerate), the penultimate precursor to L-isoleucine and L-valine, respectively. The polypeptide is Dihydroxy-acid dehydratase (Dehalococcoides mccartyi (strain CBDB1)).